The primary structure comprises 174 residues: Thiol-disulfide oxidoreductase ResA (174 aa).

A helical; Signal-anchor for type II membrane protein transmembrane segment spans residues threonine 11–phenylalanine 30. The 139-residue stretch at valine 36–proline 174 folds into the Thioredoxin domain. A disulfide bond links cysteine 74 and cysteine 77.

It belongs to the thioredoxin family. ResA subfamily.

It localises to the cell membrane. Its pathway is protein modification; cytochrome c assembly. Functionally, thiol-disulfide oxidoreductase which is required in disulfide reduction during c-type cytochrome synthesis. May accept reducing equivalents from CcdA, leading to breakage of disulfide bonds in apocytochrome c; following this reduction heme can be covalently attached. This chain is Thiol-disulfide oxidoreductase ResA, found in Geobacillus thermodenitrificans (strain NG80-2).